Reading from the N-terminus, the 106-residue chain is Urease subunit beta (106 aa).

The protein belongs to the urease beta subunit family. As to quaternary structure, heterotrimer of UreA (gamma), UreB (beta) and UreC (alpha) subunits. Three heterotrimers associate to form the active enzyme.

Its subcellular location is the cytoplasm. It catalyses the reaction urea + 2 H2O + H(+) = hydrogencarbonate + 2 NH4(+). The protein operates within nitrogen metabolism; urea degradation; CO(2) and NH(3) from urea (urease route): step 1/1. This Synechococcus sp. (strain WH7805) protein is Urease subunit beta.